A 447-amino-acid chain; its full sequence is UDP-N-acetylmuramoylalanine--D-glutamate ligase (447 aa).

112–118 contacts ATP; sequence GTNGKST.

It belongs to the MurCDEF family.

It is found in the cytoplasm. It catalyses the reaction UDP-N-acetyl-alpha-D-muramoyl-L-alanine + D-glutamate + ATP = UDP-N-acetyl-alpha-D-muramoyl-L-alanyl-D-glutamate + ADP + phosphate + H(+). Its pathway is cell wall biogenesis; peptidoglycan biosynthesis. Functionally, cell wall formation. Catalyzes the addition of glutamate to the nucleotide precursor UDP-N-acetylmuramoyl-L-alanine (UMA). This is UDP-N-acetylmuramoylalanine--D-glutamate ligase from Legionella pneumophila (strain Lens).